A 316-amino-acid chain; its full sequence is Pantothenate kinase (316 aa).

95–102 (GSVAVGKS) is an ATP binding site.

It belongs to the prokaryotic pantothenate kinase family.

It localises to the cytoplasm. It catalyses the reaction (R)-pantothenate + ATP = (R)-4'-phosphopantothenate + ADP + H(+). It participates in cofactor biosynthesis; coenzyme A biosynthesis; CoA from (R)-pantothenate: step 1/5. This chain is Pantothenate kinase, found in Klebsiella pneumoniae subsp. pneumoniae (strain ATCC 700721 / MGH 78578).